We begin with the raw amino-acid sequence, 698 residues long: ATP-dependent RNA helicase DHX33 (698 aa).

Disordered regions lie at residues 1 to 20 (MPEE…SCPP) and 29 to 50 (TAGG…AQPS). The tract at residues 1-71 (MPEEASLPPA…RRSLPIFRAR (71 aa)) is required for nucleolar location. Over residues 30–40 (AGGGGGAGGGR) the composition is skewed to gly residues. In terms of domain architecture, Helicase ATP-binding spans 75-243 (LAQLRNLDNA…FNRAPVLYLE (169 aa)). 88–95 (GETGSGKT) lines the ATP pocket. Residues 185–188 (DEAH) carry the DEAH box motif. Residues 271–441 (QIHQEAPASQ…SVILQLLAMK (171 aa)) form the Helicase C-terminal domain. The interval 462–553 (AIAQLDLLGA…ISSEGDHITL (92 aa)) is HA2; required for interaction with EIF3G and RPL26. The Critical for rDNA-binding motif lies at 536-550 (VQSVRKKFISSEGDH).

It belongs to the DEAD box helicase family. DEAH subfamily. As to quaternary structure, interacts with UBTF. Interacts with DDX3X, EIF3G and EIF3H; the interaction is independent of RNA. Interacts (via HA2 region and Helicase C-terminal domain) with the components of the large ribosomal subunit RPL3, RPL7, RPL26 and RPL27. Binds to mRNA. Interacts (via the helicase C-terminal domain) with MAVS. Binds to double-stranded RNA (via the helicase C-terminal domain). In terms of processing, ubiquitinated, leading to its degradation by the proteasome. Deubiquitinated by USP36.

It localises to the nucleus. Its subcellular location is the nucleolus. The protein resides in the nucleoplasm. The protein localises to the cytoplasm. It is found in the inflammasome. It catalyses the reaction ATP + H2O = ADP + phosphate + H(+). Implicated in nucleolar organization, ribosome biogenesis, protein synthesis and cytoplasmic dsRNA sensing. Stimulates RNA polymerase I transcription of the 47S precursor rRNA. Associates with ribosomal DNA (rDNA) loci where it is involved in POLR1A recruitment. In the cytoplasm, promotes elongation-competent 80S ribosome assembly at the late stage of mRNA translation initiation. Senses cytosolic dsRNA mediating NLRP3 inflammasome formation in macrophages and type I interferon production in myeloid dendritic cells. Required for NLRP3 activation induced by viral dsRNA and bacterial RNA. In dendritic cells, required for induction of type I interferon production induced by cytoplasmic dsRNA via the activation of MAPK and NF-kappa-B signaling pathways. The protein is ATP-dependent RNA helicase DHX33 of Mus musculus (Mouse).